Reading from the N-terminus, the 327-residue chain is Fructose import binding protein FruE (327 aa).

Positions methionine 1–alanine 22 are cleaved as a signal peptide. The N-palmitoyl cysteine moiety is linked to residue cysteine 23. A lipid anchor (S-diacylglycerol cysteine) is attached at cysteine 23.

Belongs to the bacterial solute-binding protein 2 family. The complex is composed of an ATP-binding protein (FruK), two transmembrane proteins (FruF and FruG) and a solute-binding protein (FruE).

It is found in the cell membrane. Functionally, part of the high-affinity ABC transporter complex FruEKFG involved in fructose uptake. Can also transport ribose and xylose, with lower affinity. Binds fructose, ribose and xylose, with fructose as the preferred substrate. The protein is Fructose import binding protein FruE of Bifidobacterium longum (strain NCC 2705).